A 706-amino-acid polypeptide reads, in one-letter code: MARTTPINRYRNIGICAHVDAGKTTTTERILFYTGLSHKMGEVHDGAATTDWMVQEQERGITITSAAVTTFWQGSRGQYDNYRVNVIDTPGHVDFTIEVERSLRVLDGAVVVFCGTSGVEPQSETVWRQANKYGVPRIVYVNKMDRQGANFLRVVGQIKQRLGHTPVPVQLAIGSEENFAGQIDLIKMKAIYWNDDDKGTTYREEEIPAELMDLAEEYRSNMIEAAAEANEELMNKYLEGGELTIEEIKAGLRQRTIACEIVPAVCGSSFKNKGVPLVLDAVIDYLPAPTEIPPIQGVNPDNEEQVDERHASDDEPFSALAFKIATDPFVGTLTFTRVYSGVLSSGDSVINSVKGKKERVGRMVQMHANQRDEIKECRAGDIAALIGMKDVTTGDTLCSIEKPIILERMDFPEPVISVAVEPKTKADQEKMGIALGKLAQEDPSFRVQTDEETGQTIISGMGELHLDILVDRMRREFNVEANIGKPQVSYRETITKDNVEIEGKFVRQSGGRGQFGHCWIRFSTPDVDEKGNITEGLVFTNEVVGGVVPKEYIPAIQKGIEEQMKNGVVAGYPLIGLKATVFDGSYHDVDSNEMAFKVAASMATKQLAQKGGGKVLEPIMKVEVVTPEDYMGDVMGDLNRRRGLIQGMEDSVSGKVIRAEVPLGEMFGYATDVRSMSQGRASYSMEFSKYAEAPANIVETLVKKQG.

One can recognise a tr-type G domain in the interval 8–290 (NRYRNIGICA…AVIDYLPAPT (283 aa)). GTP contacts are provided by residues 17 to 24 (AHVDAGKT), 88 to 92 (DTPGH), and 142 to 145 (NKMD).

This sequence belongs to the TRAFAC class translation factor GTPase superfamily. Classic translation factor GTPase family. EF-G/EF-2 subfamily.

The protein localises to the cytoplasm. Its function is as follows. Catalyzes the GTP-dependent ribosomal translocation step during translation elongation. During this step, the ribosome changes from the pre-translocational (PRE) to the post-translocational (POST) state as the newly formed A-site-bound peptidyl-tRNA and P-site-bound deacylated tRNA move to the P and E sites, respectively. Catalyzes the coordinated movement of the two tRNA molecules, the mRNA and conformational changes in the ribosome. The chain is Elongation factor G from Stutzerimonas stutzeri (strain A1501) (Pseudomonas stutzeri).